A 375-amino-acid chain; its full sequence is MAKRDYYEVLGVNRNATEAEVKKAFRRLAMKYHPDRNPGDKDAEVKFKEAREAYEVLCDSRKRASYDQFGHAGVEQTFGGAGAGGFGFGDLGDIFDDIFGDIFGGARGGQAREQRGADLAYELVLSLEEAVHGLSRTIKVPTWINCKTCNGSGAKKGSSPATCPRCNGSGQMRMQHGFLQVQQTCSVCRGRGQVIKDPCTDCHGQGRQQQTKTLSVKIPPGIDTGDRIRLAGEGEAGLFGAPPGDLYVQVRVKPHPLFHREGNDLHSEVPIDFTTAALGGEMEIPTLDGSVRLTIPPETQGGKQFRLRGKGVKALRSGAVGDLICHIVVETPVKLSPEQKDYLKQFAELLKKDEKNHSPRTRNWFDSVKDFFTSK.

One can recognise a J domain in the interval D5–G70. A CR-type zinc finger spans residues G133–T211. C146, C149, C163, C166, C185, C188, C199, and C202 together coordinate Zn(2+). CXXCXGXG motif repeat units lie at residues C146–G153, C163–G170, C185–G192, and C199–G206.

Belongs to the DnaJ family. In terms of assembly, homodimer. The cofactor is Zn(2+).

Its subcellular location is the cytoplasm. Its function is as follows. Participates actively in the response to hyperosmotic and heat shock by preventing the aggregation of stress-denatured proteins and by disaggregating proteins, also in an autonomous, DnaK-independent fashion. Unfolded proteins bind initially to DnaJ; upon interaction with the DnaJ-bound protein, DnaK hydrolyzes its bound ATP, resulting in the formation of a stable complex. GrpE releases ADP from DnaK; ATP binding to DnaK triggers the release of the substrate protein, thus completing the reaction cycle. Several rounds of ATP-dependent interactions between DnaJ, DnaK and GrpE are required for fully efficient folding. Also involved, together with DnaK and GrpE, in the DNA replication of plasmids through activation of initiation proteins. In Coxiella burnetii (strain CbuK_Q154) (Coxiella burnetii (strain Q154)), this protein is Chaperone protein DnaJ.